Here is a 206-residue protein sequence, read N- to C-terminus: Thymidylate kinase (206 aa).

10 to 17 is a binding site for ATP; sequence GIDGAGKS.

It belongs to the thymidylate kinase family.

It carries out the reaction dTMP + ATP = dTDP + ADP. In terms of biological role, phosphorylation of dTMP to form dTDP in both de novo and salvage pathways of dTTP synthesis. This is Thymidylate kinase from Neisseria meningitidis serogroup C / serotype 2a (strain ATCC 700532 / DSM 15464 / FAM18).